The chain runs to 140 residues: Probable glycine cleavage system H protein 3 (140 aa).

The 82-residue stretch at 29–110 (VVSIGVTDLG…PYDSWIVKIR (82 aa)) folds into the Lipoyl-binding domain. An N6-lipoyllysine modification is found at K70.

It belongs to the GcvH family. In terms of assembly, the glycine cleavage system is composed of four proteins: P, T, L and H. The cofactor is (R)-lipoate.

Its function is as follows. The glycine cleavage system catalyzes the degradation of glycine. The H protein shuttles the methylamine group of glycine from the P protein to the T protein. In Saccharolobus solfataricus (strain ATCC 35092 / DSM 1617 / JCM 11322 / P2) (Sulfolobus solfataricus), this protein is Probable glycine cleavage system H protein 3.